Here is a 394-residue protein sequence, read N- to C-terminus: MAMAYLAWRLARRSCPSSLQVTSFPVVQLHMNRTAMRASQKDFENSMNQVKLLKKDPGNEVKLKLYALYKQATEGPCNMPKPGVFDLINKAKWDAWNALGSLPKEAARQNYVDLVSSLSPSLESSSQVEPGTDRKSTGFETLVVTSEDGITKIMFNRPKKKNAINTEMYHEIMRALKAASKDDSIITVLTGNGDYYSSGNDLTNFTDIPPGGVEEKAKNNAVLLREFVGCFIDFPKPLIAVVNGPAVGISVTLLGLFDAVYASDRATFHTPFSHLGQSPEGCSSYTFPKIMSPAKATEMLIFGKKLTAGEACAQGLVTEVFPDSTFQKEVWTRLKAFAKLPPNALRISKEVIRKREREKLHAVNAEECNVLQGRWLSDECTNAVVNFLSRKSKL.

Residues 1 to 38 (MAMAYLAWRLARRSCPSSLQVTSFPVVQLHMNRTAMRA) constitute a mitochondrion transit peptide. The 86-residue stretch at 39 to 124 (SQKDFENSMN…VSSLSPSLES (86 aa)) folds into the ACB domain. Lys-51 is modified (N6-acetyllysine; alternate). An N6-succinyllysine; alternate modification is found at Lys-51. Lys-55 bears the N6-succinyllysine mark. Residue Lys-62 is modified to N6-acetyllysine; alternate. Residue Lys-62 is modified to N6-succinyllysine; alternate. 66–70 (YALYK) contributes to the an acyl-CoA binding site. An N6-succinyllysine mark is found at Lys-70, Lys-81, and Lys-90. An N6-acetyllysine; alternate modification is found at Lys-92. Lys-92 carries the post-translational modification N6-succinyllysine; alternate. Lys-92 serves as a coordination point for an acyl-CoA. Position 101 is a phosphoserine (Ser-101). Tyr-111 contacts an acyl-CoA. Ser-119 bears the Phosphoserine mark. Residues 151–322 (TKIMFNRPKK…AQGLVTEVFP (172 aa)) are ECH-like. The residue at position 161 (Lys-161) is an N6-succinyllysine. 198–202 (SGNDL) contacts substrate. Lys-289 is modified (N6-succinyllysine). The short motif at 392–394 (SKL) is the Microbody targeting signal element.

It in the C-terminal section; belongs to the enoyl-CoA hydratase/isomerase family. As to expression, abundant in heart, skeletal muscle and liver. Expressed in CD34(+) T-cells and CD34(+) bone marrow cells.

The protein resides in the mitochondrion. It is found in the peroxisome matrix. It catalyses the reaction a (3Z)-enoyl-CoA = a 4-saturated (2E)-enoyl-CoA. The catalysed reaction is (3Z)-octenoyl-CoA = (2E)-octenoyl-CoA. The enzyme catalyses a (3E)-enoyl-CoA = a 4-saturated (2E)-enoyl-CoA. It carries out the reaction (2E)-tetradecenoyl-CoA = (3Z)-tetradecenoyl-CoA. It catalyses the reaction (3E)-tetradecenoyl-CoA = (2E)-tetradecenoyl-CoA. The catalysed reaction is (3E)-octenoyl-CoA = (2E)-octenoyl-CoA. The enzyme catalyses (3E)-nonenoyl-CoA = (2E)-nonenoyl-CoA. It functions in the pathway lipid metabolism; fatty acid beta-oxidation. Its function is as follows. Able to isomerize both 3-cis and 3-trans double bonds into the 2-trans form in a range of enoyl-CoA species. Has a preference for 3-trans substrates. The protein is Enoyl-CoA delta isomerase 2 (ECI2) of Homo sapiens (Human).